We begin with the raw amino-acid sequence, 424 residues long: Lactate racemase (424 aa).

Residue 72–75 (DHTR) coordinates Ni(II)-pyridinium-3,5-bisthiocarboxylate mononucleotide. Catalysis depends on proton donor/acceptor residues His108 and His174. Residues Lys184 and His200 each coordinate Ni(II)-pyridinium-3,5-bisthiocarboxylate mononucleotide. Substrate-binding residues include Gln295 and Lys298.

Belongs to the lactate racemase family. As to quaternary structure, homodimer. It depends on Ni(II)-pyridinium-3,5-bisthiocarboxylate mononucleotide as a cofactor.

It catalyses the reaction (S)-lactate = (R)-lactate. Its activity is regulated as follows. Activation of the apo-enzyme requires the three accessory proteins LarB, LarE and LarC, that are involved in the biosynthesis of the nickel-pincer cofactor of LarA. Inhibited by sulfite that behaves as a mixed inhibitor. Catalyzes the interconversion between the D- and L-isomers of lactate. May act as a rescue enzyme to ensure D-lactate production in physiological conditions where its production by the D-lactate dehydrogenase LdhD is not sufficient. D-Lactate is absolutely required for growth of L.plantarum and is an essential component of the cell wall peptidoglycan in this species, where it is incorporated as the last residue of the muramoyl-pentadepsipeptide peptidoglycan precursor; its incorporation confers high level of vancomycin resistance. The chain is Lactate racemase from Lactiplantibacillus plantarum (strain ATCC BAA-793 / NCIMB 8826 / WCFS1) (Lactobacillus plantarum).